A 192-amino-acid polypeptide reads, in one-letter code: Probable GTP-binding protein EngB (192 aa).

The 171-residue stretch at 22–192 (SLPEIVFVGR…LLEQLENYTG (171 aa)) folds into the EngB-type G domain. GTP-binding positions include 30 to 37 (GRSNVGKS), 57 to 61 (GKTQL), 75 to 78 (DLPG), 142 to 145 (TKYD), and 172 to 174 (YSA). S37 and T59 together coordinate Mg(2+).

This sequence belongs to the TRAFAC class TrmE-Era-EngA-EngB-Septin-like GTPase superfamily. EngB GTPase family. Mg(2+) is required as a cofactor.

Necessary for normal cell division and for the maintenance of normal septation. The polypeptide is Probable GTP-binding protein EngB (Prosthecochloris aestuarii (strain DSM 271 / SK 413)).